Reading from the N-terminus, the 702-residue chain is Phosphoribosylformylglycinamidine synthase subunit PurL (702 aa).

Residue His-36 is part of the active site. ATP contacts are provided by Tyr-39 and Lys-80. Mg(2+) is bound at residue Glu-82. Substrate is bound by residues 83–86 (SHNH) and Arg-105. Catalysis depends on His-84, which acts as the Proton acceptor. Mg(2+) is bound at residue Asp-106. Position 225 (Gln-225) interacts with substrate. Asp-251 is a Mg(2+) binding site. 293–295 (ETQ) is a substrate binding site. Positions 468 and 505 each coordinate ATP. Substrate is bound at residue Ser-508.

The protein belongs to the FGAMS family. Monomer. Part of the FGAM synthase complex composed of 1 PurL, 1 PurQ and 2 PurS subunits.

It localises to the cytoplasm. It catalyses the reaction N(2)-formyl-N(1)-(5-phospho-beta-D-ribosyl)glycinamide + L-glutamine + ATP + H2O = 2-formamido-N(1)-(5-O-phospho-beta-D-ribosyl)acetamidine + L-glutamate + ADP + phosphate + H(+). It participates in purine metabolism; IMP biosynthesis via de novo pathway; 5-amino-1-(5-phospho-D-ribosyl)imidazole from N(2)-formyl-N(1)-(5-phospho-D-ribosyl)glycinamide: step 1/2. Part of the phosphoribosylformylglycinamidine synthase complex involved in the purines biosynthetic pathway. Catalyzes the ATP-dependent conversion of formylglycinamide ribonucleotide (FGAR) and glutamine to yield formylglycinamidine ribonucleotide (FGAM) and glutamate. The FGAM synthase complex is composed of three subunits. PurQ produces an ammonia molecule by converting glutamine to glutamate. PurL transfers the ammonia molecule to FGAR to form FGAM in an ATP-dependent manner. PurS interacts with PurQ and PurL and is thought to assist in the transfer of the ammonia molecule from PurQ to PurL. The sequence is that of Phosphoribosylformylglycinamidine synthase subunit PurL from Metallosphaera sedula (strain ATCC 51363 / DSM 5348 / JCM 9185 / NBRC 15509 / TH2).